We begin with the raw amino-acid sequence, 729 residues long: Solute carrier family 15 member 2 (729 aa).

Residues 1-34 (MNPFQQNESKETLFSPVSTEETPPRLSSPAKKTP) are disordered. Topologically, residues 1-57 (MNPFQQNESKETLFSPVSTEETPPRLSSPAKKTPPKICGSNYPLSIAFIVVNEFCER) are cytoplasmic. The residue at position 9 (S9) is a Phosphoserine. At T12 the chain carries Phosphothreonine. S28 is subject to Phosphoserine. A helical membrane pass occupies residues 58-78 (FSYYGMKAVLTLYFLYFLHWN). Topologically, residues 79–87 (EDTSTSVYH) are extracellular. Residues 88-108 (AFSSLCYFTPILGAAIADSWL) traverse the membrane as a helical segment. Over 109-113 (GKFKT) the chain is Cytoplasmic. A helical membrane pass occupies residues 114–134 (IIYLSLVNVLGHVIKSLSAFP). Residues 135-139 (ILGGK) lie on the Extracellular side of the membrane. The helical transmembrane segment at 140–160 (VVHTVLSLVGLCLIALGTGGI) threads the bilayer. The Cytoplasmic portion of the chain corresponds to 161 to 183 (KPCVAAFGGDQFEEKHAEERTRY). Residues 184 to 204 (FSGFYLAINAGSLISTFITPM) form a helical membrane-spanning segment. Residues 205–217 (LRGDVQCFGEDCY) lie on the Extracellular side of the membrane. A helical transmembrane segment spans residues 218–238 (ALAFGVPGLLMVIALVVFAMG). The Cytoplasmic segment spans residues 239-295 (SKMYKKPPPEGNIVAQVVKCIWFAISNRFKNRSEDIPKRQHWLDWAAEKYPKQLIMD). A helical membrane pass occupies residues 296-316 (VKTLTRVLFLYIPLPMFWALL). Residues 317–343 (DQQGSRWTLQATKMNGNLGFFVLQPDQ) are Extracellular-facing. Residues 344–364 (MQVLNPLLVLIFIPLFDLVIY) form a helical membrane-spanning segment. The Cytoplasmic portion of the chain corresponds to 365 to 380 (RLISKCGINFTSLRKM). A helical transmembrane segment spans residues 381–401 (AVGMVLACLAFAAAATVEIKI). Residues 402-611 (NEMAPPQPGS…PANKVSIAWQ (210 aa)) are Extracellular-facing. The tract at residues 402–611 (NEMAPPQPGS…PANKVSIAWQ (210 aa)) is extracellular domain (ECD). 5 N-linked (GlcNAc...) asparagine glycosylation sites follow: N435, N472, N508, N528, and N587. Residues 612–632 (LPQYALVTAGEVMFSVTGLEF) form a helical membrane-spanning segment. Topologically, residues 633-643 (SYSQAPSSMKS) are cytoplasmic. The helical transmembrane segment at 644 to 664 (VLQAAWLLTVAIGNIIVLVVA) threads the bilayer. The Extracellular portion of the chain corresponds to 665-674 (QFSGLVQWAE). Residues 675 to 695 (FVLFSCLLLVVCLIFSIMGYY) traverse the membrane as a helical segment. The Cytoplasmic segment spans residues 696–729 (YIPIKSEDIQGPEDKQIPHMQGNMINLETKKTKL).

Belongs to the major facilitator superfamily. Proton-dependent oligopeptide transporter (POT/PTR) (TC 2.A.17) family. As to quaternary structure, interacts (via extracellular domain region) with trypsin. Strongly expressed in kidney. Also detected in brain, lung, liver and heart.

Its subcellular location is the apical cell membrane. The protein localises to the cytoplasmic vesicle. The protein resides in the phagosome membrane. It is found in the cell membrane. It catalyses the reaction a dipeptide(out) + 2 H(+)(out) = a dipeptide(in) + 2 H(+)(in). The catalysed reaction is N-acetyl-D-muramoyl-L-alanyl-D-isoglutamine(out) + 3 H(+)(out) = N-acetyl-D-muramoyl-L-alanyl-D-isoglutamine(in) + 3 H(+)(in). It carries out the reaction glycyl-L-leucine(out) + 2 H(+)(out) = glycyl-L-leucine(in) + 2 H(+)(in). The enzyme catalyses glycyl-L-lysine(out) + 2 H(+)(out) = glycyl-L-lysine(in) + 2 H(+)(in). It catalyses the reaction glycyl-L-glutamate(out) + 3 H(+)(out) = glycyl-L-glutamate(in) + 3 H(+)(in). The catalysed reaction is L-alanyl-L-alanine(out) + 2 H(+)(out) = L-alanyl-L-alanine(in) + 2 H(+)(in). It carries out the reaction an L-amino acid tripeptide(out) + 2 H(+)(out) = an L-amino acid tripeptide(in) + 2 H(+)(in). The enzyme catalyses carnosine(out) + 2 H(+)(out) = carnosine(in) + 2 H(+)(in). Functionally, proton-coupled amino-acid transporter that transports oligopeptides of 2 to 4 amino acids with a preference for dipeptides. Transports neutral and anionic dipeptides with a proton to peptide stoichiometry of 2:1 or 3:1. In kidney, involved in the absorption of circulating di- and tripeptides from the glomerular filtrate. Can also transport beta-lactam antibiotics, such as the aminocephalosporin cefadroxil, and other antiviral and anticancer drugs. Transports the dipeptide-like aminopeptidase inhibitor bestatin. Also able to transport carnosine. Involved in innate immunity by promoting the detection of microbial pathogens by NOD-like receptors (NLRs). Mediates transport of bacterial peptidoglycans across the plasma membrane or, in macrophages, the phagosome membrane: catalyzes the transport of certain bacterial peptidoglycans, such as muramyl dipeptide (MDP), the NOD2 ligand. The sequence is that of Solute carrier family 15 member 2 from Oryctolagus cuniculus (Rabbit).